A 115-amino-acid polypeptide reads, in one-letter code: Large ribosomal subunit protein bL19 (115 aa).

It belongs to the bacterial ribosomal protein bL19 family.

Functionally, this protein is located at the 30S-50S ribosomal subunit interface and may play a role in the structure and function of the aminoacyl-tRNA binding site. The chain is Large ribosomal subunit protein bL19 from Streptococcus equi subsp. equi (strain 4047).